The sequence spans 362 residues: sn-glycerol-3-phosphate import ATP-binding protein UgpC (362 aa).

The ABC transporter domain occupies 4 to 235 (LSFRNVKKTY…PASTFVAGFI (232 aa)). 37–44 (GPSGCGKS) contributes to the ATP binding site.

Belongs to the ABC transporter superfamily. sn-glycerol-3-phosphate importer (TC 3.A.1.1.3) family. The complex is composed of two ATP-binding proteins (UgpC), two transmembrane proteins (UgpA and UgpE) and a solute-binding protein (UgpB).

The protein localises to the cell inner membrane. The catalysed reaction is sn-glycerol 3-phosphate(out) + ATP + H2O = sn-glycerol 3-phosphate(in) + ADP + phosphate + H(+). Its function is as follows. Part of the ABC transporter complex UgpBAEC involved in sn-glycerol-3-phosphate (G3P) import. Responsible for energy coupling to the transport system. The protein is sn-glycerol-3-phosphate import ATP-binding protein UgpC of Bordetella bronchiseptica (strain ATCC BAA-588 / NCTC 13252 / RB50) (Alcaligenes bronchisepticus).